We begin with the raw amino-acid sequence, 163 residues long: Large ribosomal subunit protein eL24y (163 aa).

The segment covering 119 to 133 has biased composition (basic and acidic residues); sequence IKKTKDEKKAKKVEF. The disordered stretch occupies residues 119–163; that stretch reads IKKTKDEKKAKKVEFASKQQKVKANFPKAAAASKGPKVGGGGGKR.

Belongs to the eukaryotic ribosomal protein eL24 family. Interacts with REIL1 and REIL2. Component of the large ribosomal subunit. In terms of tissue distribution, ubiquitous.

The protein resides in the cytoplasm. Its subcellular location is the nucleus. The protein localises to the nucleolus. It is found in the nucleoplasm. Its function is as follows. Might have an extraribosomal function in reinitiation of translation of ETTIN and MONOPTEROS genes that are involved in the auxin-mediated gynoecium patterning. Essential in leaf polarity establishment, probably having a role for translation in leaf dorsoventral patterning to specify leaf adaxial identity. The protein is Large ribosomal subunit protein eL24y of Arabidopsis thaliana (Mouse-ear cress).